The sequence spans 561 residues: Mesoderm induction early response protein 2 (561 aa).

Disordered stretches follow at residues 1–28 (MAEA…GEPN) and 52–188 (QNYG…EDPL). At Ser11 the chain carries Phosphoserine. Residues 140 to 165 (QSSADDLTPSVTSHEASDLFPSQSGS) show a composition bias toward polar residues. Residues 195–292 (KEIMVGPQFQ…EALRRLRFNV (98 aa)) form the ELM2 domain. Residues 297–349 (DGLCAWSEEERRNFEHGFRVHGKNFHLIQANKVRTRSVGECVEYYYLWKKSER) enclose the SANT domain. Positions 360 to 515 (GRRKYGPSGN…DGEPEETVGP (156 aa)) are disordered. Residues 417–428 (LSMGSSMSRSLG) show a composition bias toward low complexity. Pro residues predominate over residues 439-451 (SSEPGPRLFPPLD). Residues 453–482 (PSALPSSRRPPALAEPAFFPPATAAPEPGA) are compositionally biased toward low complexity.

In terms of assembly, part of a complex containing at least CDYL, MIER1, MIER2, HDAC1 and HDAC2.

Its subcellular location is the nucleus. Transcriptional repressor. The polypeptide is Mesoderm induction early response protein 2 (MIER2) (Bos taurus (Bovine)).